Consider the following 335-residue polypeptide: Aliphatic sulfonates import ATP-binding protein SsuB (335 aa).

The 220-residue stretch at 74–293 (VRLTRVSKRY…ARASAAFAAL (220 aa)) folds into the ABC transporter domain. 106-113 (GRSGCGKS) is a binding site for ATP. The segment at 308–335 (APAAPNAAGPEGASRGRAAPASGLRWAV) is disordered.

The protein belongs to the ABC transporter superfamily. Aliphatic sulfonates importer (TC 3.A.1.17.2) family. In terms of assembly, the complex is composed of two ATP-binding proteins (SsuB), two transmembrane proteins (SsuC) and a solute-binding protein (SsuA).

Its subcellular location is the cell inner membrane. It catalyses the reaction ATP + H2O + aliphatic sulfonate-[sulfonate-binding protein]Side 1 = ADP + phosphate + aliphatic sulfonateSide 2 + [sulfonate-binding protein]Side 1.. Functionally, part of the ABC transporter complex SsuABC involved in aliphatic sulfonates import. Responsible for energy coupling to the transport system. This is Aliphatic sulfonates import ATP-binding protein SsuB from Burkholderia mallei (strain ATCC 23344).